Consider the following 217-residue polypeptide: ATP-dependent Clp protease proteolytic subunit (217 aa).

Ser121 functions as the Nucleophile in the catalytic mechanism. Residue His146 is part of the active site.

This sequence belongs to the peptidase S14 family. In terms of assembly, fourteen ClpP subunits assemble into 2 heptameric rings which stack back to back to give a disk-like structure with a central cavity, resembling the structure of eukaryotic proteasomes.

It localises to the cytoplasm. The catalysed reaction is Hydrolysis of proteins to small peptides in the presence of ATP and magnesium. alpha-casein is the usual test substrate. In the absence of ATP, only oligopeptides shorter than five residues are hydrolyzed (such as succinyl-Leu-Tyr-|-NHMec, and Leu-Tyr-Leu-|-Tyr-Trp, in which cleavage of the -Tyr-|-Leu- and -Tyr-|-Trp bonds also occurs).. In terms of biological role, cleaves peptides in various proteins in a process that requires ATP hydrolysis. Has a chymotrypsin-like activity. Plays a major role in the degradation of misfolded proteins. The protein is ATP-dependent Clp protease proteolytic subunit of Burkholderia cenocepacia (strain HI2424).